Consider the following 225-residue polypeptide: NAD(P)H-hydrate epimerase (225 aa).

A YjeF N-terminal domain is found at 9–209 (MQTIDNYTVE…DIGLLTPQDF (201 aa)). 57–61 (NNGAD) provides a ligand contact to (6S)-NADPHX. Residues Asn-58 and Asp-119 each contribute to the K(+) site. Residues 123 to 129 (GTGLNNL) and Asp-152 each bind (6S)-NADPHX. Thr-155 is a binding site for K(+).

This sequence belongs to the NnrE/AIBP family. K(+) is required as a cofactor.

It carries out the reaction (6R)-NADHX = (6S)-NADHX. It catalyses the reaction (6R)-NADPHX = (6S)-NADPHX. Catalyzes the epimerization of the S- and R-forms of NAD(P)HX, a damaged form of NAD(P)H that is a result of enzymatic or heat-dependent hydration. This is a prerequisite for the S-specific NAD(P)H-hydrate dehydratase to allow the repair of both epimers of NAD(P)HX. The protein is NAD(P)H-hydrate epimerase of Leuconostoc sp. (strain C2).